The chain runs to 189 residues: Ribosome maturation factor RimM (189 aa).

In terms of domain architecture, PRC barrel spans 113-189 (DGEYYWVDLL…TIVADWQPDY (77 aa)).

It belongs to the RimM family. In terms of assembly, binds ribosomal protein uS19.

Its subcellular location is the cytoplasm. Its function is as follows. An accessory protein needed during the final step in the assembly of 30S ribosomal subunit, possibly for assembly of the head region. Essential for efficient processing of 16S rRNA. May be needed both before and after RbfA during the maturation of 16S rRNA. It has affinity for free ribosomal 30S subunits but not for 70S ribosomes. The sequence is that of Ribosome maturation factor RimM from Delftia acidovorans (strain DSM 14801 / SPH-1).